Here is a 103-residue protein sequence, read N- to C-terminus: Small ribosomal subunit protein uS10 (103 aa).

This sequence belongs to the universal ribosomal protein uS10 family. As to quaternary structure, part of the 30S ribosomal subunit.

Its function is as follows. Involved in the binding of tRNA to the ribosomes. The chain is Small ribosomal subunit protein uS10 from Aliivibrio fischeri (strain ATCC 700601 / ES114) (Vibrio fischeri).